The following is a 168-amino-acid chain: Ribosome maturation factor RimM (168 aa).

A PRC barrel domain is found at 93–168 (EDEFYQSDLV…IVLNIPEFID (76 aa)).

It belongs to the RimM family. As to quaternary structure, binds ribosomal protein uS19.

The protein resides in the cytoplasm. In terms of biological role, an accessory protein needed during the final step in the assembly of 30S ribosomal subunit, possibly for assembly of the head region. Essential for efficient processing of 16S rRNA. May be needed both before and after RbfA during the maturation of 16S rRNA. It has affinity for free ribosomal 30S subunits but not for 70S ribosomes. The chain is Ribosome maturation factor RimM from Wolbachia pipientis wMel.